Consider the following 339-residue polypeptide: Heat-inducible transcription repressor HrcA (339 aa).

It belongs to the HrcA family.

Functionally, negative regulator of class I heat shock genes (grpE-dnaK-dnaJ and groELS operons). Prevents heat-shock induction of these operons. This chain is Heat-inducible transcription repressor HrcA, found in Methylobacillus flagellatus (strain ATCC 51484 / DSM 6875 / VKM B-1610 / KT).